A 378-amino-acid polypeptide reads, in one-letter code: Ribosomal RNA large subunit methyltransferase G (378 aa).

The protein belongs to the methyltransferase superfamily. RlmG family.

The protein localises to the cytoplasm. It carries out the reaction guanosine(1835) in 23S rRNA + S-adenosyl-L-methionine = N(2)-methylguanosine(1835) in 23S rRNA + S-adenosyl-L-homocysteine + H(+). Functionally, specifically methylates the guanine in position 1835 (m2G1835) of 23S rRNA. The sequence is that of Ribosomal RNA large subunit methyltransferase G from Escherichia coli O6:K15:H31 (strain 536 / UPEC).